Reading from the N-terminus, the 416-residue chain is Ribulose bisphosphate carboxylase large chain (416 aa).

Positions 100 and 150 each coordinate substrate. Lysine 152 functions as the Proton acceptor in the catalytic mechanism. Residue lysine 154 coordinates substrate. Positions 178, 180, and 181 each coordinate Mg(2+). N6-carboxylysine is present on lysine 178. The active-site Proton acceptor is the histidine 271. The substrate site is built by arginine 272, histidine 304, and serine 356.

The protein belongs to the RuBisCO large chain family. Type I subfamily. In terms of assembly, heterohexadecamer of 8 large chains and 8 small chains; disulfide-linked. The disulfide link is formed within the large subunit homodimers. It depends on Mg(2+) as a cofactor. The disulfide bond which can form in the large chain dimeric partners within the hexadecamer appears to be associated with oxidative stress and protein turnover.

It is found in the plastid. It localises to the chloroplast. It catalyses the reaction 2 (2R)-3-phosphoglycerate + 2 H(+) = D-ribulose 1,5-bisphosphate + CO2 + H2O. The enzyme catalyses D-ribulose 1,5-bisphosphate + O2 = 2-phosphoglycolate + (2R)-3-phosphoglycerate + 2 H(+). RuBisCO catalyzes two reactions: the carboxylation of D-ribulose 1,5-bisphosphate, the primary event in carbon dioxide fixation, as well as the oxidative fragmentation of the pentose substrate in the photorespiration process. Both reactions occur simultaneously and in competition at the same active site. The protein is Ribulose bisphosphate carboxylase large chain (rbcL) of Cheiropleuria bicuspis (Fern).